We begin with the raw amino-acid sequence, 635 residues long: Threonine--tRNA ligase (635 aa).

The TGS domain occupies 1 to 61 (MVSIRLPDGS…DHDVALAIVT (61 aa)). Residues 242-533 (DHRKLGKQLD…LIEHHAGAMP (292 aa)) are catalytic. 3 residues coordinate Zn(2+): Cys333, His384, and His510.

It belongs to the class-II aminoacyl-tRNA synthetase family. Homodimer. It depends on Zn(2+) as a cofactor.

It is found in the cytoplasm. The enzyme catalyses tRNA(Thr) + L-threonine + ATP = L-threonyl-tRNA(Thr) + AMP + diphosphate + H(+). Its function is as follows. Catalyzes the attachment of threonine to tRNA(Thr) in a two-step reaction: L-threonine is first activated by ATP to form Thr-AMP and then transferred to the acceptor end of tRNA(Thr). Also edits incorrectly charged L-seryl-tRNA(Thr). This chain is Threonine--tRNA ligase, found in Paraburkholderia phymatum (strain DSM 17167 / CIP 108236 / LMG 21445 / STM815) (Burkholderia phymatum).